Consider the following 228-residue polypeptide: Ribonuclease HII (228 aa).

The RNase H type-2 domain maps to 1-210; it reads MKIAGIDEAG…LKKIAEKVES (210 aa). The a divalent metal cation site is built by D7, E8, and D105.

The protein belongs to the RNase HII family. In terms of assembly, monomer. It depends on Mn(2+) as a cofactor. Requires Mg(2+) as cofactor.

Its subcellular location is the cytoplasm. The enzyme catalyses Endonucleolytic cleavage to 5'-phosphomonoester.. Functionally, endonuclease that specifically degrades the RNA of RNA-DNA hybrids. The chain is Ribonuclease HII (rnhB) from Thermococcus kodakarensis (strain ATCC BAA-918 / JCM 12380 / KOD1) (Pyrococcus kodakaraensis (strain KOD1)).